We begin with the raw amino-acid sequence, 527 residues long: GMP synthase [glutamine-hydrolyzing] (527 aa).

The Glutamine amidotransferase type-1 domain maps to 4-202 (KILILDFGSQ…VLQICGARAD (199 aa)). Cysteine 81 acts as the Nucleophile in catalysis. Catalysis depends on residues histidine 176 and glutamate 178. Positions 203–395 (WEMGNYIDEA…LGLPPAMVYR (193 aa)) constitute a GMPS ATP-PPase domain. 230–236 (SGGVDSS) contributes to the ATP binding site.

As to quaternary structure, homodimer.

The catalysed reaction is XMP + L-glutamine + ATP + H2O = GMP + L-glutamate + AMP + diphosphate + 2 H(+). It functions in the pathway purine metabolism; GMP biosynthesis; GMP from XMP (L-Gln route): step 1/1. Catalyzes the synthesis of GMP from XMP. The sequence is that of GMP synthase [glutamine-hydrolyzing] from Paraburkholderia phytofirmans (strain DSM 17436 / LMG 22146 / PsJN) (Burkholderia phytofirmans).